Consider the following 230-residue polypeptide: Acyl-protein thioesterase 1 (230 aa).

Catalysis depends on charge relay system residues Ser119, Asp174, and His208. Position 224 is an N6-acetyllysine (Lys224).

The protein belongs to the AB hydrolase superfamily. AB hydrolase 2 family. Homodimer.

Its subcellular location is the cytoplasm. The protein localises to the cell membrane. It is found in the nucleus membrane. It localises to the endoplasmic reticulum. It carries out the reaction S-hexadecanoyl-L-cysteinyl-[protein] + H2O = L-cysteinyl-[protein] + hexadecanoate + H(+). The catalysed reaction is 1-hexadecanoyl-sn-glycero-3-phosphocholine + H2O = sn-glycerol 3-phosphocholine + hexadecanoate + H(+). It catalyses the reaction a 1-(9Z-octadecenoyl)-2-acyl-sn-glycero-3-phosphocholine + H2O = a 2-acyl-sn-glycero-3-phosphocholine + (9Z)-octadecenoate + H(+). Functionally, acts as an acyl-protein thioesterase. Hydrolyzes fatty acids from S-acylated cysteine residues in proteins such as trimeric G alpha proteins or HRAS. Acts as a palmitoyl thioesterase that catalyzes depalmitoylation of proteins, such as ADRB2, KCNMA1 and SQSTM1. Acts as a negative regulator of autophagy by mediating palmitoylation of SQSTM1, decreasing affinity between SQSTM1 and ATG8 proteins and recruitment of ubiquitinated cargo proteins to autophagosomes. Acts as a lysophospholipase and hydrolyzes lysophosphatidylcholine (lyso-PC). Also hydrolyzes lysophosphatidylethanolamine (lyso-PE), lysophosphatidylinositol (lyso-PI) and lysophosphatidylserine (lyso-PS). Has much higher thioesterase activity than lysophospholipase activity. Contributes to the production of lysophosphatidic acid (LPA) during blood coagulation by recognizing and cleaving plasma phospholipids to generate lysophospholipids which in turn act as substrates for ENPP2 to produce LPA. This Pongo abelii (Sumatran orangutan) protein is Acyl-protein thioesterase 1 (LYPLA1).